A 548-amino-acid chain; its full sequence is Probable malate:quinone oxidoreductase (548 aa).

The tract at residues 522 to 548 (KPQAADSTPKAQLKPQPARKEVADIAL) is disordered. A compositionally biased stretch (basic and acidic residues) spans 539-548 (ARKEVADIAL).

It belongs to the MQO family. Requires FAD as cofactor.

It carries out the reaction (S)-malate + a quinone = a quinol + oxaloacetate. It functions in the pathway carbohydrate metabolism; tricarboxylic acid cycle; oxaloacetate from (S)-malate (quinone route): step 1/1. In Escherichia fergusonii (strain ATCC 35469 / DSM 13698 / CCUG 18766 / IAM 14443 / JCM 21226 / LMG 7866 / NBRC 102419 / NCTC 12128 / CDC 0568-73), this protein is Probable malate:quinone oxidoreductase.